The sequence spans 210 residues: 2-Cys peroxiredoxin BAS1, chloroplastic (210 aa).

A chloroplast-targeting transit peptide spans 1–10; sequence DARARSFVAR. In terms of domain architecture, Thioredoxin spans 18-177; sequence PLVGNKAPDF…TLRTLQALQY (160 aa). The Cysteine sulfenic acid (-SOH) intermediate role is filled by Cys-64.

This sequence belongs to the peroxiredoxin family. AhpC/Prx1 subfamily. Homodimer; disulfide-linked, upon oxidation. In terms of tissue distribution, expressed in leaf blade, sheath, basiplast, stem and green spike. Maximal expression in young developing shoots segments where cell division and elongation take place. Not expressed in roots.

The protein localises to the plastid. Its subcellular location is the chloroplast. It catalyses the reaction a hydroperoxide + [thioredoxin]-dithiol = an alcohol + [thioredoxin]-disulfide + H2O. In terms of biological role, thiol-specific peroxidase that catalyzes the reduction of hydrogen peroxide and organic hydroperoxides to water and alcohols, respectively. Plays a role in cell protection against oxidative stress by detoxifying peroxides. May be an antioxidant enzyme particularly in the developing shoot and photosynthesizing leaf. The polypeptide is 2-Cys peroxiredoxin BAS1, chloroplastic (BAS1) (Hordeum vulgare (Barley)).